Reading from the N-terminus, the 434-residue chain is MAFRRINNLELFIKRCSAPTLYYSSIRTATGNNYSNNTANITTDSSSSSNNNSNRNNKNDNNNEDNNKFNWRSLVRFFVPFSLGAVASSLVMKRDDLELTPTISAARPSGRRREFNFIADVVGGCADSVVYIEIKDTRHFDYFSGQPITASNGSGFVIEQNGLILTNAHVVINKPHTMVQVRLSDGRTFPATIEDVDQTSDLATLRIQVNNLPVMRLGKSSTLRSGEWVVALGSPLALSNTVTAGVISSTQRASQELGLRNRDINYLQTDAAITFGNSGGPLVNLDGEAIGVNSMKVTAGISFAIPIDYVKVFLERAAERRKKGSAYKTGYPVKRYMGITMLTLTPDILFELKSRSQNMPSNLMHGVLVWKVIVGSPAHSGGLQPGDIVTHINKKEIKNSSDVYDALGCGDKELNMIIMRGVKQMHVTITPEDP.

The tract at residues 34–65 (YSNNTANITTDSSSSSNNNSNRNNKNDNNNED) is disordered. Over residues 35–60 (SNNTANITTDSSSSSNNNSNRNNKND) the composition is skewed to low complexity. The helical transmembrane segment at 74-92 (LVRFFVPFSLGAVASSLVM) threads the bilayer. The IAP-binding signature appears at 85–88 (AVAS). The tract at residues 151–314 (SNGSGFVIEQ…IPIDYVKVFL (164 aa)) is serine protease. Catalysis depends on charge relay system residues His-169, Asp-201, and Ser-278. The PDZ domain occupies 337–424 (MGITMLTLTP…NMIIMRGVKQ (88 aa)).

The protein belongs to the peptidase S1C family. Interacts with th/DIAP1 (via BIR 2 domain).

The protein resides in the mitochondrion intermembrane space. The protein localises to the mitochondrion membrane. The catalysed reaction is Cleavage of non-polar aliphatic amino-acids at the P1 position, with a preference for Val, Ile and Met. At the P2 and P3 positions, Arg is selected most strongly with a secondary preference for other hydrophilic residues.. Its function is as follows. Serine protease that shows proteolytic activity against a non-specific substrate beta-casein. Promotes or induces cell death either by direct binding to and inhibition of BIRC proteins (also called inhibitor of apoptosis proteins, IAPs), leading to an increase in caspase activity, or by a BIRC inhibition-independent, caspase-independent and serine protease activity-dependent mechanism. Can antagonize antiapoptotic activity of th/Diap1 by directly inducing the degradation of th/Diap1. The protein is Serine protease HTRA2, mitochondrial of Drosophila willistoni (Fruit fly).